Here is a 466-residue protein sequence, read N- to C-terminus: uncharacterized protein (466 aa).

The protein belongs to the myoviridae tail sheath protein family.

This is an uncharacterized protein from Bacillus subtilis (strain 168).